Here is a 463-residue protein sequence, read N- to C-terminus: Glutamyl-tRNA reductase (463 aa).

Residues 49 to 52 (TCNR), S109, 114 to 116 (EQQ), and Q120 contribute to the substrate site. The Nucleophile role is filled by C50. 196–201 (GAGAMS) provides a ligand contact to NADP(+).

Belongs to the glutamyl-tRNA reductase family. As to quaternary structure, homodimer.

It catalyses the reaction (S)-4-amino-5-oxopentanoate + tRNA(Glu) + NADP(+) = L-glutamyl-tRNA(Glu) + NADPH + H(+). The protein operates within porphyrin-containing compound metabolism; protoporphyrin-IX biosynthesis; 5-aminolevulinate from L-glutamyl-tRNA(Glu): step 1/2. Catalyzes the NADPH-dependent reduction of glutamyl-tRNA(Glu) to glutamate 1-semialdehyde (GSA). The sequence is that of Glutamyl-tRNA reductase from Corynebacterium glutamicum (strain R).